The primary structure comprises 81 residues: Small ribosomal subunit protein bS18 (81 aa).

The protein belongs to the bacterial ribosomal protein bS18 family. In terms of assembly, part of the 30S ribosomal subunit. Forms a tight heterodimer with protein bS6.

Its function is as follows. Binds as a heterodimer with protein bS6 to the central domain of the 16S rRNA, where it helps stabilize the platform of the 30S subunit. This chain is Small ribosomal subunit protein bS18, found in Chlamydia muridarum (strain MoPn / Nigg).